A 256-amino-acid chain; its full sequence is DNA repair protein RecO (256 aa).

The protein belongs to the RecO family.

Functionally, involved in DNA repair and RecF pathway recombination. This chain is DNA repair protein RecO, found in Rhizobium etli (strain ATCC 51251 / DSM 11541 / JCM 21823 / NBRC 15573 / CFN 42).